Here is a 1211-residue protein sequence, read N- to C-terminus: DNA-directed RNA polymerase subunit beta' (1211 aa).

Zn(2+)-binding residues include cysteine 60, cysteine 62, cysteine 75, and cysteine 78. Residues aspartate 450, aspartate 452, and aspartate 454 each coordinate Mg(2+). 4 residues coordinate Zn(2+): cysteine 819, cysteine 893, cysteine 900, and cysteine 903.

It belongs to the RNA polymerase beta' chain family. In terms of assembly, the RNAP catalytic core consists of 2 alpha, 1 beta, 1 beta' and 1 omega subunit. When a sigma factor is associated with the core the holoenzyme is formed, which can initiate transcription. Mg(2+) serves as cofactor. Requires Zn(2+) as cofactor.

The enzyme catalyses RNA(n) + a ribonucleoside 5'-triphosphate = RNA(n+1) + diphosphate. In terms of biological role, DNA-dependent RNA polymerase catalyzes the transcription of DNA into RNA using the four ribonucleoside triphosphates as substrates. This is DNA-directed RNA polymerase subunit beta' from Streptococcus equi subsp. zooepidemicus (strain H70).